The chain runs to 167 residues: Outer envelope pore protein 21A, chloroplastic (167 aa).

The Cytoplasmic portion of the chain corresponds to M1 to K21. The beta stranded transmembrane segment at F22–Q31 threads the bilayer. The Chloroplast intermembrane portion of the chain corresponds to L32–H55. Residues E56–L65 traverse the membrane as a beta stranded segment. The Cytoplasmic segment spans residues H66–E71. Residues K72 to K81 form a beta stranded membrane-spanning segment. Residues K82–T87 lie on the Chloroplast intermembrane side of the membrane. The chain crosses the membrane as a beta stranded span at residues D88–G97. The Cytoplasmic segment spans residues R98–A110. The beta stranded transmembrane segment at K111–I120 threads the bilayer. Topologically, residues W121–Q127 are chloroplast intermembrane. The beta stranded transmembrane segment at D128–M137 threads the bilayer. Residues F138 to P142 are Cytoplasmic-facing. The chain crosses the membrane as a beta stranded span at residues Y143–T152. The Chloroplast intermembrane segment spans residues F153–K158. Residues G159–L167 form a beta stranded membrane-spanning segment.

It belongs to the plastid outer envelope porin OEP21 (TC 1.B.29) family.

The protein localises to the plastid. It is found in the etioplast membrane. It localises to the chloroplast outer membrane. Its function is as follows. Voltage-dependent rectifying anion channel that facilitates the translocation between chloroplast and cytoplasm of phosphorylated carbohydrates such as triosephosphate, 3-phosphoglycerate and inorganic phosphate (Pi) depending of ATP to triosephosphate ratio in the plastidial intermembrane space; in high triosephosphate/ATP conditions (e.g. photosynthesis), export of triosphosphate from chloroplast (outward rectifying channels), but in high ATP/triosephosphate conditions (e.g. dark phase), import of phosphosolutes (inward rectifying channels). The chain is Outer envelope pore protein 21A, chloroplastic (OEP21A) from Arabidopsis thaliana (Mouse-ear cress).